The primary structure comprises 1249 residues: Protein transport protein Sec31A (1249 aa).

7 WD repeats span residues 4 to 47, 64 to 111, 120 to 160, 166 to 206, 209 to 254, 258 to 298, and 301 to 342; these read KEID…EIFE, SSSH…AGDK, KHTG…TPMT, QPPE…PIIK, DHSN…SPLR, NHAR…VLYE, and TNTQ…DGLR. Residues 161-470 are interaction with SEC13; the sequence is PGAKTQPPED…IDASQTDFEK (310 aa). Residues 397-429 form a WD 8; interaction with SEC13 repeat; it reads SFSFGGKLVTFENVTGQPQQGAEQPRRQPVFIS. Arginine 423 is modified (asymmetric dimethylarginine). Phosphoserine occurs at positions 526 and 531. A Glycyl lysine isopeptide (Lys-Gly) (interchain with G-Cter in ubiquitin) cross-link involves residue lysine 647. Disordered regions lie at residues 790-829, 842-940, and 954-1123; these read QGRS…VQSQ, TTWS…RYPN, and PHMY…PIGN. A compositionally biased stretch (polar residues) spans 796-805; it reads GQESSRSSYE. The residue at position 799 (serine 799) is a Phosphoserine. An interaction with PDCD6 region spans residues 800–1142; it reads SRSSYEGQPL…TEKITKKPIP (343 aa). An ALG-2-binding site motif-2 (ABS-2) motif is present at residues 873 to 879; it reads GFIMHGN. A compositionally biased stretch (pro residues) spans 898-908; the sequence is QPPPYPQPQPY. 2 stretches are compositionally biased toward low complexity: residues 961–970 and 991–1007; these read PASSPTSSSA and PSSS…GTPP. A compositionally biased stretch (polar residues) spans 1013–1024; it reads PASQRTGPQNGW. Residues 1056–1074 show a composition bias toward low complexity; that stretch reads PGGDPQPQGLQQQPSASGP. Threonine 1190 is subject to Phosphothreonine. Residue serine 1192 is modified to Phosphoserine. Residue lysine 1246 forms a Glycyl lysine isopeptide (Lys-Gly) (interchain with G-Cter in ubiquitin) linkage.

It belongs to the WD repeat SEC31 family. As to quaternary structure, COPII is composed of at least 5 proteins: the SEC23/24 complex, the SEC13/31 complex and SAR1. SEC13 and SEC31 make a 2:2 tetramer that forms the edge element of the COPII outer coat. The tetramer self-assembles in multiple copies to form the complete polyhedral cage. Interacts (via WD 8) with SEC13. Interacts with PDCD6; interaction takes place in response to cytosolic calcium increase and leads to bridge together the BCR(KLHL12) complex and SEC31A, leading to monoubiquitination. Interacts with KLHL12. Post-translationally, monoubiquitinated by the BCR(KLHL12) E3 ubiquitin ligase complex, leading to regulate the size of COPII coats. In terms of tissue distribution, ubiquitously expressed.

The protein localises to the cytoplasm. Its subcellular location is the cytoplasmic vesicle. It localises to the COPII-coated vesicle membrane. It is found in the endoplasmic reticulum membrane. Functionally, component of the coat protein complex II (COPII) which promotes the formation of transport vesicles from the endoplasmic reticulum (ER). The coat has two main functions, the physical deformation of the endoplasmic reticulum membrane into vesicles and the selection of cargo molecules. The protein is Protein transport protein Sec31A (Sec31a) of Rattus norvegicus (Rat).